A 1380-amino-acid polypeptide reads, in one-letter code: Hepatocyte growth factor receptor (1380 aa).

The first 24 residues, 1-24 (MKAPAALAPGILVLLLTLVQKGGG), serve as a signal peptide directing secretion. Residues 25 to 931 (ECREALAKSE…VIVQPDQNFT (907 aa)) are Extracellular-facing. The Sema domain occupies 27–513 (REALAKSEMN…TGKKITKIPL (487 aa)). Asparagine 45 is a glycosylation site (N-linked (GlcNAc...) asparagine). 4 disulfides stabilise this stretch: cysteine 95/cysteine 101, cysteine 98/cysteine 156, cysteine 129/cysteine 137, and cysteine 170/cysteine 173. Asparagine 200 is a glycosylation site (N-linked (GlcNAc...) asparagine). 2 disulfides stabilise this stretch: cysteine 296–cysteine 361 and cysteine 383–cysteine 395. 2 N-linked (GlcNAc...) asparagine glycosylation sites follow: asparagine 397 and asparagine 403. Disulfide bonds link cysteine 518-cysteine 536, cysteine 524-cysteine 559, cysteine 527-cysteine 543, and cysteine 539-cysteine 549. N-linked (GlcNAc...) asparagine glycosylation is present at asparagine 551. 3 consecutive IPT/TIG domains span residues 561-654 (PTIY…FSYV), 656-738 (PEIT…FSYQ), and 741-835 (PLVV…LIYV). Threonine 580 is a glycosylation site (O-linked (Man) threonine). N-linked (GlcNAc...) asparagine glycosylation is found at asparagine 592, asparagine 605, and asparagine 633. Residues threonine 675 and threonine 760 are each glycosylated (O-linked (Man) threonine). N-linked (GlcNAc...) asparagine glycans are attached at residues asparagine 784, asparagine 878, and asparagine 929. A helical transmembrane segment spans residues 932–954 (GLIVGVVSISVILLSSLGLFLWL). The Cytoplasmic portion of the chain corresponds to 955–1380 (KKRKQIKDLG…HDTVDGEVDT (426 aa)). Serine 965 carries the post-translational modification Phosphoserine. Threonine 976 is modified (phosphothreonine). 3 positions are modified to phosphoserine: serine 989, serine 996, and serine 999. Tyrosine 1002 bears the Phosphotyrosine mark. Positions 1077–1344 (VHFNEVIGRG…RISAIFSTFI (268 aa)) constitute a Protein kinase domain. ATP is bound by residues 1083–1091 (IGRGHFGCV) and lysine 1109. The active-site Proton acceptor is the aspartate 1203. Residues 1211–1380 (LDGKFTVKVA…HDTVDGEVDT (170 aa)) form an interaction with RANBP9 region. Phosphotyrosine is present on tyrosine 1229. Phosphotyrosine; by autocatalysis is present on residues tyrosine 1233 and tyrosine 1234. Threonine 1288 is subject to Phosphothreonine. Residues 1319 to 1358 (WHPKAEMRPSFTELVSRISAIFSTFIGEHYVHVNATYVNV) are interaction with MUC20. Tyrosine 1348 and tyrosine 1355 each carry phosphotyrosine; by autocatalysis. Phosphotyrosine is present on tyrosine 1364.

The protein belongs to the protein kinase superfamily. Tyr protein kinase family. Heterodimer made of an alpha chain (50 kDa) and a beta chain (145 kDa) which are disulfide linked. Binds PLXNB1. Interacts when phosphorylated with downstream effectors including STAT3, PIK3R1, SRC, PCLG1, GRB2 and GAB1. Interacts with SPSB1, SPSB2 and SPSB4. Interacts with INPP5D/SHIP1. When phosphorylated at Tyr-1355, interacts with INPPL1/SHIP2. Interacts with RANBP9 and RANBP10, as well as SPSB1, SPSB2, SPSB3 and SPSB4. SPSB1 binding occurs in the presence and in the absence of HGF, however HGF treatment has a positive effect on this interaction. Interacts with MUC20; prevents interaction with GRB2 and suppresses hepatocyte growth factor-induced cell proliferation. Interacts with GRB10. Interacts with PTPN1 and PTPN2. Interacts with HSP90AA1 and HSP90AB1; the interaction suppresses MET kinase activity. Interacts with tensin TNS3. Interacts (when phosphorylated) with tensin TNS4 (via SH2 domain); the interaction increases MET protein stability by inhibiting MET endocytosis and subsequent lysosomal degradation. Post-translationally, autophosphorylated in response to ligand binding on Tyr-1233 and Tyr-1234 in the kinase domain leading to further phosphorylation of Tyr-1348 and Tyr-1355 in the C-terminal multifunctional docking site. Dephosphorylated by PTPRJ at Tyr-1348 and Tyr-1364. Dephosphorylated by PTPN1 and PTPN2. Ubiquitinated. Ubiquitination by CBL regulates the receptor stability and activity through proteasomal degradation. In terms of processing, O-mannosylation of IPT/TIG domains by TMEM260 is required for protein maturation. O-mannosylated residues are composed of single mannose glycans that are not elongated or modified.

Its subcellular location is the membrane. It catalyses the reaction L-tyrosyl-[protein] + ATP = O-phospho-L-tyrosyl-[protein] + ADP + H(+). In its inactive state, the C-terminal tail interacts with the catalytic domain and inhibits the kinase activity. Upon ligand binding, the C-terminal tail is displaced and becomes phosphorylated, thus increasing the kinase activity. In terms of biological role, receptor tyrosine kinase that transduces signals from the extracellular matrix into the cytoplasm by binding to hepatocyte growth factor/HGF ligand. Regulates many physiological processes including proliferation, scattering, morphogenesis and survival. Ligand binding at the cell surface induces autophosphorylation of MET on its intracellular domain that provides docking sites for downstream signaling molecules. Following activation by ligand, interacts with the PI3-kinase subunit PIK3R1, PLCG1, SRC, GRB2, STAT3 or the adapter GAB1. Recruitment of these downstream effectors by MET leads to the activation of several signaling cascades including the RAS-ERK, PI3 kinase-AKT, or PLCgamma-PKC. The RAS-ERK activation is associated with the morphogenetic effects while PI3K/AKT coordinates prosurvival effects. During embryonic development, MET signaling plays a role in gastrulation, development and migration of muscles and neuronal precursors, angiogenesis and kidney formation. In adults, participates in wound healing as well as organ regeneration and tissue remodeling. Also promotes differentiation and proliferation of hematopoietic cells. This chain is Hepatocyte growth factor receptor (MET), found in Echinops telfairi (Lesser hedgehog tenrec).